A 161-amino-acid chain; its full sequence is Large ribosomal subunit protein uL30m (161 aa).

The N-terminal 34 residues, 1–34, are a transit peptide targeting the mitochondrion; sequence MAGILRSIVQRPPGRLQTATKGVEPLVCVDWIRH.

This sequence belongs to the universal ribosomal protein uL30 family. Component of the mitochondrial ribosome large subunit (39S) which comprises a 16S rRNA and about 50 distinct proteins.

The protein localises to the mitochondrion. The chain is Large ribosomal subunit protein uL30m (MRPL30) from Bos taurus (Bovine).